Here is a 283-residue protein sequence, read N- to C-terminus: MKRKFVGAAIGGALAVAGAPVALSAVGFTGAGIAAGSIAAKMMSAAAIANGGGIAAGGLVATLQSVGVLGLSTITNIILVAVGTATGARAEGSMGASREQESGPQDPPQELQEPQEPPSCKKQDLNLGKFVGAAIGGALAVAGAPIALSAVGFTGAGIAAGSIAAKMMSAAAIANGGGIAAGGLVATLQSVGILGLSTSTNIILGAVGAATGATAAGAMGACREQEPGLQDLQQEPKEPQEPQELQKQQEPQEPQELQKQQETQETQETQELQKTQEPPSYEK.

Residues 1 to 90 constitute a mitochondrion transit peptide; that stretch reads MKRKFVGAAI…AVGTATGARA (90 aa). Residues 90-120 are disordered; sequence AEGSMGASREQESGPQDPPQELQEPQEPPSC. The next 3 membrane-spanning stretches (helical) occupy residues 130–150, 176–196, and 202–222; these read FVGA…ALSA, GGGI…ILGL, and IILG…MGAC. The tract at residues 227–283 is disordered; that stretch reads PGLQDLQQEPKEPQEPQELQKQQEPQEPQELQKQQETQETQETQELQKTQEPPSYEK. The segment covering 242 to 283 has biased composition (low complexity); the sequence is PQELQKQQEPQEPQELQKQQETQETQETQELQKTQEPPSYEK.

It belongs to the IFI6/IFI27 family. As to quaternary structure, homooligomer. Interacts with BAK1. Interacts with BAX. Interacts with adenine nucleotide translocase.

It localises to the mitochondrion inner membrane. Functions in the intrinsic apoptotic signaling pathway and may have an interferon-induced antiviral activity. The protein is Interferon alpha-inducible protein 27-like protein 2B of Mus musculus (Mouse).